The sequence spans 183 residues: RNA 2',3'-cyclic phosphodiesterase (183 aa).

His44 (proton donor) is an active-site residue. Short sequence motifs (HXTX) lie at residues 44-47 (HITL) and 130-133 (HMTL). Catalysis depends on His130, which acts as the Proton acceptor.

Belongs to the 2H phosphoesterase superfamily. ThpR family.

It carries out the reaction a 3'-end 2',3'-cyclophospho-ribonucleotide-RNA + H2O = a 3'-end 2'-phospho-ribonucleotide-RNA + H(+). Functionally, hydrolyzes RNA 2',3'-cyclic phosphodiester to an RNA 2'-phosphomonoester. The polypeptide is RNA 2',3'-cyclic phosphodiesterase (ytlP) (Bacillus subtilis (strain 168)).